The primary structure comprises 158 residues: UPF0303 protein SCO2848 (158 aa).

It belongs to the UPF0303 family.

The polypeptide is UPF0303 protein SCO2848 (Streptomyces coelicolor (strain ATCC BAA-471 / A3(2) / M145)).